The chain runs to 108 residues: Thioredoxin (108 aa).

The 107-residue stretch at 2–108 folds into the Thioredoxin domain; sequence GKYFEATDKN…IAKKIDEHIG (107 aa). A disulfide bond links cysteine 32 and cysteine 35.

It belongs to the thioredoxin family.

In terms of biological role, participates in various redox reactions through the reversible oxidation of its active center dithiol to a disulfide and catalyzes dithiol-disulfide exchange reactions. This is Thioredoxin (trxA) from Chlorobaculum thiosulfatiphilum (Chlorobium limicola f.sp. thiosulfatophilum).